The primary structure comprises 614 residues: Zinc finger protein ztf-7 (614 aa).

Positions 1–10 (MSTSGSGGGN) are enriched in gly residues. A disordered region spans residues 1-160 (MSTSGSGGGN…SRPKKPEKMS (160 aa)). Residues 18–41 (NVASSPNANPKKNADTESSGGSKN) show a composition bias toward polar residues. Over residues 54-69 (GSNSRNGSRTNSVSNS) the composition is skewed to low complexity. Residues 74-83 (NRKDWTDRKS) are compositionally biased toward basic and acidic residues. The segment covering 132 to 150 (DYSDEYELDEPFSDSDDED) has biased composition (acidic residues). 2 C2H2-type zinc fingers span residues 356-380 (NECI…KRNH) and 447-470 (VVCL…KTTH).

It belongs to the ZNF277 family. As to quaternary structure, interacts with rps-2.

It localises to the cytoplasm. Its function is as follows. Probable transcription factor. Limits the ability to tolerate cold environment or cold-warm stress. In complex with rps-2, mediates the cold-warm shock response by promoting translocation of components of the RNA exosome from the nucleolus to nucleoplasm. This chain is Zinc finger protein ztf-7, found in Caenorhabditis elegans.